The sequence spans 181 residues: MQLRGTTIVAVRTEAGVAVAGDGQVTLGQAIAVKHTARKVRRMYKDKVVIGFAGATADAFTLFERFEAKLEEFGGNLVRASVELAKDWRKDKYLRRLEAMMIVADAGNVLILSGTGDVIEPDDGVAAIGSGGPYAMAAARALLRNTELSAREIVEKSMAIAAEMCVYTNDQLVVETLEKPA.

T6 is a catalytic residue. 3 residues coordinate Na(+): A162, C165, and T168.

It belongs to the peptidase T1B family. HslV subfamily. As to quaternary structure, a double ring-shaped homohexamer of HslV is capped on each side by a ring-shaped HslU homohexamer. The assembly of the HslU/HslV complex is dependent on binding of ATP.

It is found in the cytoplasm. The catalysed reaction is ATP-dependent cleavage of peptide bonds with broad specificity.. With respect to regulation, allosterically activated by HslU binding. In terms of biological role, protease subunit of a proteasome-like degradation complex believed to be a general protein degrading machinery. The sequence is that of ATP-dependent protease subunit HslV from Solidesulfovibrio magneticus (strain ATCC 700980 / DSM 13731 / RS-1) (Desulfovibrio magneticus).